Consider the following 329-residue polypeptide: Glycerol-3-phosphate dehydrogenase [NAD(P)+] (329 aa).

Residues S13, W14, H34, and K105 each contribute to the NADPH site. K105, G134, and S136 together coordinate sn-glycerol 3-phosphate. A138 is an NADPH binding site. Sn-glycerol 3-phosphate-binding residues include K189, D242, S252, R253, and N254. K189 serves as the catalytic Proton acceptor. R253 contacts NADPH. The NADPH site is built by V277 and E279.

This sequence belongs to the NAD-dependent glycerol-3-phosphate dehydrogenase family.

It is found in the cytoplasm. It catalyses the reaction sn-glycerol 3-phosphate + NAD(+) = dihydroxyacetone phosphate + NADH + H(+). It carries out the reaction sn-glycerol 3-phosphate + NADP(+) = dihydroxyacetone phosphate + NADPH + H(+). Its pathway is membrane lipid metabolism; glycerophospholipid metabolism. Its function is as follows. Catalyzes the reduction of the glycolytic intermediate dihydroxyacetone phosphate (DHAP) to sn-glycerol 3-phosphate (G3P), the key precursor for phospholipid synthesis. This is Glycerol-3-phosphate dehydrogenase [NAD(P)+] from Legionella pneumophila (strain Paris).